Reading from the N-terminus, the 1187-residue chain is Myelin transcription factor 1-like protein (1187 aa).

A disordered region spans residues 1-20 (MDVDAEEKRHRTRSKGVRVP). The CCHHC-type 1 zinc-finger motif lies at 22 to 65 (EPAIQELFSCPTPGCDGSGHVSGKYARHRSVYGCPLAKKRKTQD). Residues Cys-31, Cys-36, His-49, and Cys-55 each coordinate Zn(2+). Disordered regions lie at residues 56 to 178 (PLAK…QMSC) and 221 to 248 (RTESEMNSNTSNSLEDDSDKNENLGRKS). Positions 89–172 (ECYESDGTED…EEEEEEEENE (84 aa)) are enriched in acidic residues. Position 251 is a phosphoserine (Ser-251). Disordered stretches follow at residues 343–422 (SETN…DRSE) and 450–509 (REKM…PTPG). The segment covering 344–358 (ETNPQDRSQPPNMSV) has biased composition (polar residues). Composition is skewed to basic and acidic residues over residues 362-377 (VRQEDDFPGRTPDRSY), 401-412 (AKEDGCHERDDD), and 450-504 (REKM…RESK). CCHHC-type zinc fingers lie at residues 496-539 (SRTE…PPEI) and 540-583 (LAMH…KLAK). Residues Cys-505, Cys-510, His-523, Cys-529, Cys-549, Cys-554, His-567, and Cys-573 each coordinate Zn(2+). The disordered stretch occupies residues 684-708 (ASPSSSTTSSYAPSSSSNLSCGGGS). CCHHC-type zinc fingers lie at residues 895-938 (LATS…GIRI), 944-987 (DKED…QKDG), and 997-1040 (KSVK…MKKA). Zn(2+) is bound by residues Cys-904, Cys-909, His-922, Cys-928, Cys-953, Cys-958, His-971, Cys-977, Cys-1006, Cys-1011, His-1024, and Cys-1030. Positions 1055-1131 (SNGIENDEEI…LANLSQSLIH (77 aa)) form a coiled coil.

Belongs to the MYT1 family. In terms of assembly, interacts with SIN3B. As to expression, brain, testis and pituitary gland. Expression is higher in the brain than in the testis and pituitary gland. Highest level expression seen in the developing CNS.

Its subcellular location is the nucleus. The protein resides in the chromosome. Transcription factor that plays a key role in neuronal differentiation. Acts by specifically repressing expression of non-neuronal genes during neuron differentiation. In contrast to other transcription repressors that inhibit specific lineages, mediates repression of multiple differentiation programs. Also represses expression of negative regulators of neurogenesis, such as members of the Notch signaling pathway, including HES1. The combination of three transcription factors, ASCL1, POU3F2/BRN2 and MYT1L, is sufficient to reprogram fibroblasts and other somatic cells into induced neuronal (iN) cells in vitro. Directly binds the 5'-AAGTT-3' core motif present on the promoter of target genes and represses transcription by recruiting a multiprotein complex containing SIN3B. The 5'-AAGTT-3' core motif is absent from the promoter of neural genes. The polypeptide is Myelin transcription factor 1-like protein (Myt1l) (Rattus norvegicus (Rat)).